Here is a 98-residue protein sequence, read N- to C-terminus: Small ribosomal subunit protein bS18 (98 aa).

It belongs to the bacterial ribosomal protein bS18 family. As to quaternary structure, part of the 30S ribosomal subunit. Forms a tight heterodimer with protein bS6.

Binds as a heterodimer with protein bS6 to the central domain of the 16S rRNA, where it helps stabilize the platform of the 30S subunit. The sequence is that of Small ribosomal subunit protein bS18 from Flavobacterium johnsoniae (strain ATCC 17061 / DSM 2064 / JCM 8514 / BCRC 14874 / CCUG 350202 / NBRC 14942 / NCIMB 11054 / UW101) (Cytophaga johnsonae).